The following is a 369-amino-acid chain: MLIQYHKISNNDPNRIQLLSMIFCEIILLIFELFEFAAIIFNMSRYQFHFNLKVVVGYAIFAYWFDIIARITIAFFEIGLFNLDDQTIAVETEKLPWNYKNMFFMLLFCCSTYRVYFMFLICSVTLLLAVERFLATIWVSTYESVQHKWVSIVLTSTNSIAGIFGSLLFHYELIFDTAVWCSLGLCFNFVSIFLYVILFNSNKSKIELCQTREITQSYTLSLRFQLNENLKIMNWIKNSILVVTCFNTLLAGFLIASNNEYLKNDYPVLVKCCHTFLNLGIAIYAQVVFFVAILADRHFRTYFLRFKPIRVFTKPFFGRIFPEDFKIKKILSTSDETNVYFSKLSLQWDEQIIRSSHVVVAKKKRFWRV.

At 1 to 20 (MLIQYHKISNNDPNRIQLLS) the chain is on the extracellular side. The helical transmembrane segment at 21–41 (MIFCEIILLIFELFEFAAIIF) threads the bilayer. At 42-55 (NMSRYQFHFNLKVV) the chain is on the cytoplasmic side. A helical membrane pass occupies residues 56–76 (VGYAIFAYWFDIIARITIAFF). Over 77–118 (EIGLFNLDDQTIAVETEKLPWNYKNMFFMLLFCCSTYRVYFM) the chain is Extracellular. A helical membrane pass occupies residues 119–139 (FLICSVTLLLAVERFLATIWV). Residues 140 to 148 (STYESVQHK) are Cytoplasmic-facing. Residues 149–169 (WVSIVLTSTNSIAGIFGSLLF) form a helical membrane-spanning segment. The Extracellular segment spans residues 170 to 178 (HYELIFDTA). A helical membrane pass occupies residues 179-199 (VWCSLGLCFNFVSIFLYVILF). The Cytoplasmic portion of the chain corresponds to 200-234 (NSNKSKIELCQTREITQSYTLSLRFQLNENLKIMN). Residues 235-255 (WIKNSILVVTCFNTLLAGFLI) traverse the membrane as a helical segment. Residues 256 to 274 (ASNNEYLKNDYPVLVKCCH) lie on the Extracellular side of the membrane. A helical transmembrane segment spans residues 275–295 (TFLNLGIAIYAQVVFFVAILA). The Cytoplasmic segment spans residues 296–369 (DRHFRTYFLR…VAKKKRFWRV (74 aa)).

It belongs to the nematode receptor-like protein sre family.

It localises to the cell membrane. The protein is Serpentine receptor class epsilon-2 (sre-2) of Caenorhabditis elegans.